A 294-amino-acid polypeptide reads, in one-letter code: Phosphatidylserine decarboxylase proenzyme (294 aa).

Residues Asp-100, His-157, and Ser-261 each act as charge relay system; for autoendoproteolytic cleavage activity in the active site. The active-site Schiff-base intermediate with substrate; via pyruvic acid; for decarboxylase activity is the Ser-261. Ser-261 carries the pyruvic acid (Ser); by autocatalysis modification.

It belongs to the phosphatidylserine decarboxylase family. PSD-B subfamily. Prokaryotic type I sub-subfamily. Heterodimer of a large membrane-associated beta subunit and a small pyruvoyl-containing alpha subunit. Pyruvate serves as cofactor. Is synthesized initially as an inactive proenzyme. Formation of the active enzyme involves a self-maturation process in which the active site pyruvoyl group is generated from an internal serine residue via an autocatalytic post-translational modification. Two non-identical subunits are generated from the proenzyme in this reaction, and the pyruvate is formed at the N-terminus of the alpha chain, which is derived from the carboxyl end of the proenzyme. The autoendoproteolytic cleavage occurs by a canonical serine protease mechanism, in which the side chain hydroxyl group of the serine supplies its oxygen atom to form the C-terminus of the beta chain, while the remainder of the serine residue undergoes an oxidative deamination to produce ammonia and the pyruvoyl prosthetic group on the alpha chain. During this reaction, the Ser that is part of the protease active site of the proenzyme becomes the pyruvoyl prosthetic group, which constitutes an essential element of the active site of the mature decarboxylase.

The protein resides in the cell membrane. The catalysed reaction is a 1,2-diacyl-sn-glycero-3-phospho-L-serine + H(+) = a 1,2-diacyl-sn-glycero-3-phosphoethanolamine + CO2. Its pathway is phospholipid metabolism; phosphatidylethanolamine biosynthesis; phosphatidylethanolamine from CDP-diacylglycerol: step 2/2. Catalyzes the formation of phosphatidylethanolamine (PtdEtn) from phosphatidylserine (PtdSer). The sequence is that of Phosphatidylserine decarboxylase proenzyme from Histophilus somni (strain 129Pt) (Haemophilus somnus).